We begin with the raw amino-acid sequence, 192 residues long: Peptidyl-prolyl cis-trans isomerase 1 (192 aa).

The PPIase cyclophilin-type domain occupies 25–188; the sequence is FFDVSIGEEP…KTVTIADCGE (164 aa).

It belongs to the cyclophilin-type PPIase family.

It carries out the reaction [protein]-peptidylproline (omega=180) = [protein]-peptidylproline (omega=0). Functionally, PPIases accelerate the folding of proteins. It catalyzes the cis-trans isomerization of proline imidic peptide bonds in oligopeptides. The polypeptide is Peptidyl-prolyl cis-trans isomerase 1 (cyn-1) (Caenorhabditis elegans).